A 303-amino-acid polypeptide reads, in one-letter code: Elongation factor Ts (303 aa).

The interval 80 to 83 (TDFV) is involved in Mg(2+) ion dislocation from EF-Tu.

It belongs to the EF-Ts family.

Its subcellular location is the cytoplasm. Functionally, associates with the EF-Tu.GDP complex and induces the exchange of GDP to GTP. It remains bound to the aminoacyl-tRNA.EF-Tu.GTP complex up to the GTP hydrolysis stage on the ribosome. This Clostridium perfringens (strain SM101 / Type A) protein is Elongation factor Ts.